Reading from the N-terminus, the 77-residue chain is Defensin-like protein 91 (77 aa).

The first 27 residues, 1–27, serve as a signal peptide directing secretion; it reads METKKISYFLLPSLMIVALIFQPMCSA. 4 disulfides stabilise this stretch: cysteine 38–cysteine 75, cysteine 43–cysteine 64, cysteine 49–cysteine 73, and cysteine 53–cysteine 74.

Belongs to the DEFL family.

It is found in the secreted. This Arabidopsis thaliana (Mouse-ear cress) protein is Defensin-like protein 91 (LCR47).